The primary structure comprises 782 residues: E3 UFM1-protein ligase 1 homolog (782 aa).

A disordered region spans residues 404-478; sequence NVSTQELEDE…SRGGGGASKK (75 aa).

This sequence belongs to the UFL1 family.

Functionally, E3 UFM1-protein ligase that mediates ufmylation of target proteins. The sequence is that of E3 UFM1-protein ligase 1 homolog from Drosophila melanogaster (Fruit fly).